A 150-amino-acid polypeptide reads, in one-letter code: MNKTSVPSIDSIDRQWYLVDAENQTLGRLATEVASVLRGKNKASFTPHLDTGDFVIVVNADKIRVSGKKPQQKLYRRHSGRPGGMKVETFEHLQERLPERIVEKAIKGMLPHNALGRQLFRKLKVYKGTEHPHAAQQPKTLQLDPAASAQ.

A disordered region spans residues 130–150 (EHPHAAQQPKTLQLDPAASAQ).

It belongs to the universal ribosomal protein uL13 family. Part of the 50S ribosomal subunit.

Its function is as follows. This protein is one of the early assembly proteins of the 50S ribosomal subunit, although it is not seen to bind rRNA by itself. It is important during the early stages of 50S assembly. The chain is Large ribosomal subunit protein uL13 from Synechococcus sp. (strain CC9311).